The following is a 347-amino-acid chain: 5-formaminoimidazole-4-carboxamide-1-(beta)-D-ribofuranosyl 5'-monophosphate synthetase (347 aa).

His-23 and Ser-91 together coordinate 5-amino-1-(5-phospho-beta-D-ribosyl)imidazole-4-carboxamide. Residues 112–323 (RKILLWESDQ…YSYLYWDEPM (212 aa)) enclose the ATP-grasp domain. Residues 142–196 (PDEV…VPAY) and Glu-218 contribute to the ATP site. Asn-244 provides a ligand contact to 5-amino-1-(5-phospho-beta-D-ribosyl)imidazole-4-carboxamide. 2 residues coordinate Mg(2+): Glu-283 and Glu-296.

Belongs to the phosphohexose mutase family. Mg(2+) serves as cofactor. Requires Mn(2+) as cofactor.

It catalyses the reaction 5-amino-1-(5-phospho-beta-D-ribosyl)imidazole-4-carboxamide + formate + ATP = 5-formamido-1-(5-phospho-D-ribosyl)imidazole-4-carboxamide + ADP + phosphate. Its pathway is purine metabolism; IMP biosynthesis via de novo pathway; 5-formamido-1-(5-phospho-D-ribosyl)imidazole-4-carboxamide from 5-amino-1-(5-phospho-D-ribosyl)imidazole-4-carboxamide (formate route): step 1/1. In terms of biological role, catalyzes the ATP- and formate-dependent formylation of 5-aminoimidazole-4-carboxamide-1-beta-d-ribofuranosyl 5'-monophosphate (AICAR) to 5-formaminoimidazole-4-carboxamide-1-beta-d-ribofuranosyl 5'-monophosphate (FAICAR) in the absence of folates. The polypeptide is 5-formaminoimidazole-4-carboxamide-1-(beta)-D-ribofuranosyl 5'-monophosphate synthetase (Ignicoccus hospitalis (strain KIN4/I / DSM 18386 / JCM 14125)).